Reading from the N-terminus, the 202-residue chain is uncharacterized protein (202 aa).

Lys136 is covalently cross-linked (Isoglutamyl lysine isopeptide (Lys-Gln) (interchain with Q-Cter in protein Pup)).

This is an uncharacterized protein from Mycobacterium tuberculosis (strain ATCC 25618 / H37Rv).